Here is a 332-residue protein sequence, read N- to C-terminus: Beta-chimaerin (332 aa).

The Phorbol-ester/DAG-type zinc finger occupies 78–128 (THNFKVHTFRGPHWCEYCANFMWGLIAQGVRCSDCGLNVHKQCSKHVPNDC). Residues 141 to 332 (CDLTTLVKAH…ILIENEDVLF (192 aa)) form the Rho-GAP domain.

The protein resides in the membrane. With respect to regulation, in the inactive state, the N terminus protrudes into the active site of the Rho-GAP domain, sterically blocking Rac binding. Phospholipid binding to the Phorbol-ester/DAG-type zinc-finger/C1 domain triggers the cooperative dissociation of these interactions, allowing the N-terminus to move out of the active site and thereby activating the enzyme. In terms of biological role, GTPase-activating protein for p21-rac. This is Beta-chimaerin (Chn2) from Mus musculus (Mouse).